The sequence spans 507 residues: ATP synthase subunit alpha, chloroplastic (507 aa).

Glycine 170 to threonine 177 lines the ATP pocket.

Belongs to the ATPase alpha/beta chains family. F-type ATPases have 2 components, CF(1) - the catalytic core - and CF(0) - the membrane proton channel. CF(1) has five subunits: alpha(3), beta(3), gamma(1), delta(1), epsilon(1). CF(0) has four main subunits: a, b, b' and c.

The protein resides in the plastid. It localises to the chloroplast thylakoid membrane. It catalyses the reaction ATP + H2O + 4 H(+)(in) = ADP + phosphate + 5 H(+)(out). In terms of biological role, produces ATP from ADP in the presence of a proton gradient across the membrane. The alpha chain is a regulatory subunit. This Vitis vinifera (Grape) protein is ATP synthase subunit alpha, chloroplastic.